Here is a 188-residue protein sequence, read N- to C-terminus: MSIKSDKWIRRMAQEHGMIEPFVERQVRGEQDSRVISFGVSSYGYDVRCADEFKVFTNINSATVDPKNFDAGSFVDIKSDVCIIPPNSFALARTVEYFRIPRDVLTICLGKSTYARCGIIVNVTPLEPEWEGHVTLEFSNTTTLPAKIYANEGVAQMLFLQSDEECEVSYKDRGGKYQGQRGVTLPRT.

DCTP-binding positions include 111–116 (KSTYAR), 135–137 (TLE), glutamine 156, tyrosine 170, and glutamine 180. Glutamate 137 serves as the catalytic Proton donor/acceptor.

The protein belongs to the dCTP deaminase family. Homotrimer.

It carries out the reaction dCTP + H2O + H(+) = dUTP + NH4(+). Its pathway is pyrimidine metabolism; dUMP biosynthesis; dUMP from dCTP (dUTP route): step 1/2. Catalyzes the deamination of dCTP to dUTP. This Pseudomonas putida (strain GB-1) protein is dCTP deaminase.